Here is a 362-residue protein sequence, read N- to C-terminus: Phosphoserine aminotransferase (362 aa).

Ser9 and Arg42 together coordinate L-glutamate. Pyridoxal 5'-phosphate is bound by residues 76–77, Trp102, Thr153, Asp174, and Gln197; that span reads GR. Residue Lys198 is modified to N6-(pyridoxal phosphate)lysine. 239–240 provides a ligand contact to pyridoxal 5'-phosphate; that stretch reads NT.

The protein belongs to the class-V pyridoxal-phosphate-dependent aminotransferase family. SerC subfamily. As to quaternary structure, homodimer. The cofactor is pyridoxal 5'-phosphate.

The protein resides in the cytoplasm. It catalyses the reaction O-phospho-L-serine + 2-oxoglutarate = 3-phosphooxypyruvate + L-glutamate. The catalysed reaction is 4-(phosphooxy)-L-threonine + 2-oxoglutarate = (R)-3-hydroxy-2-oxo-4-phosphooxybutanoate + L-glutamate. Its pathway is amino-acid biosynthesis; L-serine biosynthesis; L-serine from 3-phospho-D-glycerate: step 2/3. The protein operates within cofactor biosynthesis; pyridoxine 5'-phosphate biosynthesis; pyridoxine 5'-phosphate from D-erythrose 4-phosphate: step 3/5. Catalyzes the reversible conversion of 3-phosphohydroxypyruvate to phosphoserine and of 3-hydroxy-2-oxo-4-phosphonooxybutanoate to phosphohydroxythreonine. This chain is Phosphoserine aminotransferase, found in Enterobacter sp. (strain 638).